A 209-amino-acid chain; its full sequence is Thiamine-phosphate synthase (209 aa).

Residues 37–41 (QLREK) and Asn69 each bind 4-amino-2-methyl-5-(diphosphooxymethyl)pyrimidine. 2 residues coordinate Mg(2+): Asp70 and Asp89. 4-amino-2-methyl-5-(diphosphooxymethyl)pyrimidine is bound at residue Ser108. Residue 134–136 (TNT) coordinates 2-[(2R,5Z)-2-carboxy-4-methylthiazol-5(2H)-ylidene]ethyl phosphate. Lys137 is a binding site for 4-amino-2-methyl-5-(diphosphooxymethyl)pyrimidine. Residues Gly164 and 184–185 (VS) contribute to the 2-[(2R,5Z)-2-carboxy-4-methylthiazol-5(2H)-ylidene]ethyl phosphate site.

The protein belongs to the thiamine-phosphate synthase family. It depends on Mg(2+) as a cofactor.

The catalysed reaction is 2-[(2R,5Z)-2-carboxy-4-methylthiazol-5(2H)-ylidene]ethyl phosphate + 4-amino-2-methyl-5-(diphosphooxymethyl)pyrimidine + 2 H(+) = thiamine phosphate + CO2 + diphosphate. It catalyses the reaction 2-(2-carboxy-4-methylthiazol-5-yl)ethyl phosphate + 4-amino-2-methyl-5-(diphosphooxymethyl)pyrimidine + 2 H(+) = thiamine phosphate + CO2 + diphosphate. The enzyme catalyses 4-methyl-5-(2-phosphooxyethyl)-thiazole + 4-amino-2-methyl-5-(diphosphooxymethyl)pyrimidine + H(+) = thiamine phosphate + diphosphate. It functions in the pathway cofactor biosynthesis; thiamine diphosphate biosynthesis; thiamine phosphate from 4-amino-2-methyl-5-diphosphomethylpyrimidine and 4-methyl-5-(2-phosphoethyl)-thiazole: step 1/1. Condenses 4-methyl-5-(beta-hydroxyethyl)thiazole monophosphate (THZ-P) and 2-methyl-4-amino-5-hydroxymethyl pyrimidine pyrophosphate (HMP-PP) to form thiamine monophosphate (TMP). This chain is Thiamine-phosphate synthase, found in Methanobrevibacter smithii (strain ATCC 35061 / DSM 861 / OCM 144 / PS).